We begin with the raw amino-acid sequence, 224 residues long: Phosphoribosylformylglycinamidine synthase subunit PurQ (224 aa).

One can recognise a Glutamine amidotransferase type-1 domain in the interval 3-224 (FGVVVFPGSN…GLLEKVVALA (222 aa)). C86 (nucleophile) is an active-site residue. Residues H195 and E197 contribute to the active site.

In terms of assembly, part of the FGAM synthase complex composed of 1 PurL, 1 PurQ and 2 PurS subunits.

Its subcellular location is the cytoplasm. The enzyme catalyses N(2)-formyl-N(1)-(5-phospho-beta-D-ribosyl)glycinamide + L-glutamine + ATP + H2O = 2-formamido-N(1)-(5-O-phospho-beta-D-ribosyl)acetamidine + L-glutamate + ADP + phosphate + H(+). It catalyses the reaction L-glutamine + H2O = L-glutamate + NH4(+). It participates in purine metabolism; IMP biosynthesis via de novo pathway; 5-amino-1-(5-phospho-D-ribosyl)imidazole from N(2)-formyl-N(1)-(5-phospho-D-ribosyl)glycinamide: step 1/2. Part of the phosphoribosylformylglycinamidine synthase complex involved in the purines biosynthetic pathway. Catalyzes the ATP-dependent conversion of formylglycinamide ribonucleotide (FGAR) and glutamine to yield formylglycinamidine ribonucleotide (FGAM) and glutamate. The FGAM synthase complex is composed of three subunits. PurQ produces an ammonia molecule by converting glutamine to glutamate. PurL transfers the ammonia molecule to FGAR to form FGAM in an ATP-dependent manner. PurS interacts with PurQ and PurL and is thought to assist in the transfer of the ammonia molecule from PurQ to PurL. In Nostoc sp. (strain PCC 7120 / SAG 25.82 / UTEX 2576), this protein is Phosphoribosylformylglycinamidine synthase subunit PurQ.